The sequence spans 309 residues: Ribosomal RNA large subunit methyltransferase F (309 aa).

This sequence belongs to the methyltransferase superfamily. METTL16/RlmF family.

The protein localises to the cytoplasm. The catalysed reaction is adenosine(1618) in 23S rRNA + S-adenosyl-L-methionine = N(6)-methyladenosine(1618) in 23S rRNA + S-adenosyl-L-homocysteine + H(+). Its function is as follows. Specifically methylates the adenine in position 1618 of 23S rRNA. The polypeptide is Ribosomal RNA large subunit methyltransferase F (Cronobacter sakazakii (strain ATCC BAA-894) (Enterobacter sakazakii)).